The primary structure comprises 274 residues: Large ribosomal subunit protein uL2 (274 aa).

Residues 221–256 (RGTAMNPVDHPHGGGEGRNFGKHPVTPWGVPTKGYK) form a disordered region.

This sequence belongs to the universal ribosomal protein uL2 family. In terms of assembly, part of the 50S ribosomal subunit. Forms a bridge to the 30S subunit in the 70S ribosome.

Its function is as follows. One of the primary rRNA binding proteins. Required for association of the 30S and 50S subunits to form the 70S ribosome, for tRNA binding and peptide bond formation. It has been suggested to have peptidyltransferase activity; this is somewhat controversial. Makes several contacts with the 16S rRNA in the 70S ribosome. The polypeptide is Large ribosomal subunit protein uL2 (Thioalkalivibrio sulfidiphilus (strain HL-EbGR7)).